Consider the following 250-residue polypeptide: Menaquinol:cytochrome c reductase cytochrome c subunit (250 aa).

3 consecutive transmembrane segments (helical) span residues 46 to 62, 104 to 124, and 137 to 157; these read WLVG…LTVA, VIGA…APFL, and VATG…WESV. The 73-residue stretch at 178-250 folds into the Cytochrome c domain; sequence DTNAEGYKIA…LQKMANSSPA (73 aa). Heme c is bound by residues cysteine 192, cysteine 195, and histidine 196. The segment at 229–250 is disordered; the sequence is MPGGIFKGTDEELQKMANSSPA.

It belongs to the cytochrome b family. As to quaternary structure, the main subunits of the menaquinol:cytochrome c complex are a Rieske-type iron-sulfur protein (QcrA), a cytochrome b (QcrB) and a cytochrome c (QcrC). Heme c is required as a cofactor.

It is found in the cell membrane. Functionally, component of the menaquinol:cytochrome c reductase complex. The chain is Menaquinol:cytochrome c reductase cytochrome c subunit (qcrC) from Geobacillus thermodenitrificans.